Here is a 662-residue protein sequence, read N- to C-terminus: Eukaryotic peptide chain release factor GTP-binding subunit (662 aa).

Residues 1–220 (MASNQPNNGE…PATVTEDATD (220 aa)) are disordered. Residues 26 to 40 (AKAPTFTPKAAPFIP) show a composition bias toward low complexity. A compositionally biased stretch (polar residues) spans 62–89 (YTGQGQNSNSPHPTKSYQQYYQKPTGNT). The span at 91 to 102 (DEDKSRVPDFSK) shows a compositional bias: basic and acidic residues. The segment covering 122 to 134 (GGNTSAPKSTKPI) has biased composition (polar residues). Over residues 141-158 (TKAPTTTKPAAPAAQSKT) the composition is skewed to low complexity. A Phosphothreonine modification is found at Thr-182. Residues 192-213 (AKTPSAPAAALKKAAEAAEPAT) show a composition bias toward low complexity. The region spanning 236–464 (KEHVNIVFIG…LDSMTHLERK (229 aa)) is the tr-type G domain. The segment at 245–252 (GHVDAGKS) is G1. 245–252 (GHVDAGKS) serves as a coordination point for GTP. The G2 stretch occupies residues 301–305 (GKTVE). Residues 322–325 (DAPG) form a G3 region. Residues 384–387 (NKMD) and 428–429 (AY) contribute to the GTP site. The tract at residues 384–387 (NKMD) is G4. The G5 stretch occupies residues 427 to 429 (SAY). Ser-539 bears the Phosphoserine mark.

Belongs to the TRAFAC class translation factor GTPase superfamily. Classic translation factor GTPase family. ERF3 subfamily. Component of the eRF1-eRF3-GTP ternary complex, composed of sup45/eRF1, sup35/eRF3 and GTP.

The protein localises to the cytoplasm. It catalyses the reaction GTP + H2O = GDP + phosphate + H(+). GTPase component of the eRF1-eRF3-GTP ternary complex, a ternary complex that mediates translation termination in response to the termination codons. Sup35/eRF3 mediates sup45/ERF1 delivery to stop codons: The eRF1-eRF3-GTP complex binds to a stop codon in the ribosomal A-site. GTP hydrolysis by sup35/eRF3 induces a conformational change that leads to its dissociation, permitting sup45/eRF1 to accommodate fully in the A-site. The polypeptide is Eukaryotic peptide chain release factor GTP-binding subunit (sup35) (Schizosaccharomyces pombe (strain 972 / ATCC 24843) (Fission yeast)).